A 409-amino-acid chain; its full sequence is NDP-glycosyltransferase ltbB (409 aa).

Asn36 carries N-linked (GlcNAc...) asparagine glycosylation. The chain crosses the membrane as a helical span at residues 319 to 339 (IWAFAYVWAWLQTLYTAPWIA).

This sequence belongs to the GT2 glycosyltransferase family.

The protein resides in the membrane. It participates in secondary metabolite biosynthesis. Functionally, NDP-glycosyltransferase; part of the gene cluster that mediates the biosynthesis of luteodienoside A, a glycosylated polyketide consisting of an unusual 1-O-beta-D-glucopyranosyl-myo-inositol (glucinol) ester of 3-hydroxy-2,2,4-trimethylocta-4,6-dienoic acid. LtbB likely serves as a glucinol synthase by transferring D-glucose to myo-inositol using NDP-glucose as a substrate. The ltbA carnitine O-acyltransferase (cAT) domain uses glucinol produced by the glycosyltransferase ltbB as an offloading substrate to release luteodienoside A from the HR-PKS. Since ltbA and ltbB are sufficient for the biosynthesis of luteodienoside A, the functions of the methyltransferase ltbC and the FAD-binding monooxygenase ltbD within the pathway remain obscur. The protein is NDP-glycosyltransferase ltbB of Aspergillus luteorubrus.